The following is a 122-amino-acid chain: Large ribosomal subunit protein uL29 (122 aa).

A Phosphoserine modification is found at S12.

Belongs to the universal ribosomal protein uL29 family. As to quaternary structure, component of the large ribosomal subunit (LSU). Mature yeast ribosomes consist of a small (40S) and a large (60S) subunit. The 40S small subunit contains 1 molecule of ribosomal RNA (18S rRNA) and at least 33 different proteins. The large 60S subunit contains 3 rRNA molecules (25S, 5.8S and 5S rRNA) and at least 46 different proteins. uL29 is associated with the polypeptide exit tunnel.

It is found in the cytoplasm. It localises to the nucleus. Its subcellular location is the nucleolus. Functionally, component of the ribosome, a large ribonucleoprotein complex responsible for the synthesis of proteins in the cell. The small ribosomal subunit (SSU) binds messenger RNAs (mRNAs) and translates the encoded message by selecting cognate aminoacyl-transfer RNA (tRNA) molecules. The large subunit (LSU) contains the ribosomal catalytic site termed the peptidyl transferase center (PTC), which catalyzes the formation of peptide bonds, thereby polymerizing the amino acids delivered by tRNAs into a polypeptide chain. The nascent polypeptides leave the ribosome through a tunnel in the LSU and interact with protein factors that function in enzymatic processing, targeting, and the membrane insertion of nascent chains at the exit of the ribosomal tunnel. The sequence is that of Large ribosomal subunit protein uL29 (rpl35) from Schizosaccharomyces pombe (strain 972 / ATCC 24843) (Fission yeast).